A 370-amino-acid polypeptide reads, in one-letter code: Queuine tRNA-ribosyltransferase (370 aa).

Asp93 acts as the Proton acceptor in catalysis. Residues 93-97 (DSGGF), Asp147, Gln189, and Gly216 contribute to the substrate site. Residues 247-253 (GVGSPDC) are RNA binding. Asp266 serves as the catalytic Nucleophile. An RNA binding; important for wobble base 34 recognition region spans residues 271–275 (TRIAR). The Zn(2+) site is built by Cys304, Cys306, Cys309, and His335.

It belongs to the queuine tRNA-ribosyltransferase family. As to quaternary structure, homodimer. Within each dimer, one monomer is responsible for RNA recognition and catalysis, while the other monomer binds to the replacement base PreQ1. Zn(2+) serves as cofactor.

It catalyses the reaction 7-aminomethyl-7-carbaguanine + guanosine(34) in tRNA = 7-aminomethyl-7-carbaguanosine(34) in tRNA + guanine. The protein operates within tRNA modification; tRNA-queuosine biosynthesis. Catalyzes the base-exchange of a guanine (G) residue with the queuine precursor 7-aminomethyl-7-deazaguanine (PreQ1) at position 34 (anticodon wobble position) in tRNAs with GU(N) anticodons (tRNA-Asp, -Asn, -His and -Tyr). Catalysis occurs through a double-displacement mechanism. The nucleophile active site attacks the C1' of nucleotide 34 to detach the guanine base from the RNA, forming a covalent enzyme-RNA intermediate. The proton acceptor active site deprotonates the incoming PreQ1, allowing a nucleophilic attack on the C1' of the ribose to form the product. After dissociation, two additional enzymatic reactions on the tRNA convert PreQ1 to queuine (Q), resulting in the hypermodified nucleoside queuosine (7-(((4,5-cis-dihydroxy-2-cyclopenten-1-yl)amino)methyl)-7-deazaguanosine). In Pelotomaculum thermopropionicum (strain DSM 13744 / JCM 10971 / SI), this protein is Queuine tRNA-ribosyltransferase.